The chain runs to 150 residues: Large ribosomal subunit protein bL9 (150 aa).

The protein belongs to the bacterial ribosomal protein bL9 family.

Binds to the 23S rRNA. The chain is Large ribosomal subunit protein bL9 from Yersinia pseudotuberculosis serotype I (strain IP32953).